The primary structure comprises 347 residues: Tsukushi (347 aa).

The first 19 residues, 1 to 19, serve as a signal peptide directing secretion; sequence MASLLCLFFSLLGLAAIGA. The 42-residue stretch at 20 to 61 folds into the LRRNT domain; sequence VKNCHPQCRCEVETFGLFDSFSLTKVDCSRIGPGNTPVPIPL. 10 LRR repeats span residues 62-83, 88-109, 112-133, 135-156, 160-175, 185-205, 206-227, 230-252, 255-277, and 280-301; these read DTSHLDLSLNSTTSISDTMLSG, TLVSLDLSSNLIAQISPKAFSK, YLETLDLSSNALEGLSDGCFTG, PLVELDLSENQFKEFNLDLFTT, DLPIMVDLSRNLLTSI, YIKSLMLAGNQLKTVPKLNGI, PLQYLNLDGNLISSIDTGAFDS, ELVHLSLSGLSELTLIHPGAFRS, NLQALDLSNNSQLKTLNPNVFSG, and SLQELNLSNTAVTPLSRTVFMQ. Residue Asn-285 is glycosylated (N-linked (GlcNAc...) asparagine).

In terms of assembly, forms a ternary complex with chordin/CHRD and BMP4.

The protein resides in the secreted. Its function is as follows. Contributes to various developmental events through its interactions with multiple signaling pathways. Dorsalizing factor which functions as an inhibitor of bone morphogenetic proteins during gastrulation. In Danio rerio (Zebrafish), this protein is Tsukushi (tsku).